Reading from the N-terminus, the 595-residue chain is Probable inactive glycosyltransferase 25 family member 3 (595 aa).

An N-terminal signal peptide occupies residues Met-1–Gly-24. Residues Asn-75, Asn-153, Asn-237, and Asn-360 are each glycosylated (N-linked (GlcNAc...) asparagine). The interval Arg-576–Leu-595 is disordered. Positions Arg-592 to Leu-595 match the Prevents secretion from ER motif.

It belongs to the glycosyltransferase 25 family.

Its subcellular location is the endoplasmic reticulum lumen. Its function is as follows. Probable cell adhesion protein involved in leukocyte transmigration across the blood-brain barrier. Does not express any beta-galactosyltransferase activity in vitro. In Bos taurus (Bovine), this protein is Probable inactive glycosyltransferase 25 family member 3 (CERCAM).